The following is a 330-amino-acid chain: MKKSFIHQQEEISFVKNTFTQYLIAKLDVVEVQGPILSRVGDGMQDNLSGTENPVSVNVLKIPNATFEVVHSLAKWKRHTLARFGFNEGEGLVVNMKALRPDEDSLDQTHSVYVDQWDWEKVIPDGKRNLAYLKETVETIYKVIRLTELAVEARYDIEAVLPKKITFIHTEELVAKYPDLTPKERENAITKEFGAVFLIGIGGGLPDGKPHDGRAPDYDDWTTETENGYHGLNGDLLVWNDQLGSAFELSSMGIRVDEEALKRQVEMTGDQDRLAFDWHKSLLNGLFPLTIGGGIGQSRMVMFLLRKKHIGEVQTSVWPQEVRDSYDNIL.

Belongs to the class-II aminoacyl-tRNA synthetase family. AsnA subfamily.

It localises to the cytoplasm. The catalysed reaction is L-aspartate + NH4(+) + ATP = L-asparagine + AMP + diphosphate + H(+). Its pathway is amino-acid biosynthesis; L-asparagine biosynthesis; L-asparagine from L-aspartate (ammonia route): step 1/1. The protein is Aspartate--ammonia ligase of Streptococcus pyogenes serotype M6 (strain ATCC BAA-946 / MGAS10394).